The following is a 720-amino-acid chain: Cyclopenase penL (720 aa).

H137, H141, and H313 together coordinate Cu cation.

Belongs to the tyrosinase family. Cu(2+) is required as a cofactor.

The enzyme catalyses (-)-cyclopenine = viridicatin + methyl isocyanate + H(+). It carries out the reaction (-)-4'-methoxycyclopenine = 4'-methoxyviridicatin + methyl isocyanate + H(+). It participates in secondary metabolite biosynthesis. Its pathway is alkaloid biosynthesis. It functions in the pathway mycotoxin biosynthesis. Cyclopenase; part of the gene cluster that mediates the biosynthesis of penigequinolones, potent insecticidal alkaloids that contain a highly modified 10-carbon prenyl group. The first stage is catalyzed by the nonribosomal peptide synthetase penN that condenses anthranilic acid and O-methyl-L-tyrosine to produce 4'-methoxycyclopeptin. 4'-methoxycyclopeptin is then converted to 4'-methoxydehydrocyclopeptin by the ketoglutarate-dependent dioxygenase penM through dehydrogenation to form a double bond between C-alpha and C-beta of the O-methyltyrosine side chain. PenM also converts its first product methoxydehydrocyclopeptin to 4'-methoxycyclopenin. The following conversion of 4'methoxycyclopenin into 4'-methoxyviridicatin is catalyzed by the cyclopenase penL. 4'-methoxyviridicatin is the precursor of quinolone natural products, and is further converted to quinolinone B. The prenyltransferase penI then catalyzes the canonical Friedel-Crafts alkylation of quinolinone B with dimethylallyl cation to yield dimethylallyl quinolone, which is subjected to FAD-dependent dehydrogenation by the FAD-linked oxidoreductase penH to yield conjugated aryl diene. The delta(3') double bond then serves as the site of the second alkylation with DMAPP catalyzed by the prenyltransferase penG to yield a carbenium ion intermediate, which can be attacked by H(2)O to yield a styrenyl quinolone containing a C3'-hydroxyprenyl chain, or undergo cyclization to yield yaequinolones J1 and J2. The conversion of the styrenyl quinolone into the tetrahydrofuran-containing yaequinolone C is performed by the FAD-dependent monooxygenase penE and involves epoxidation of the terminal C7'-C8' olefin, followed by epoxide ring opening initiated by the C3' hydroxyl group. The predicted cysteine hydrolase penJ acts as an epoxide hydrolase that enhances the rate of the 5-exo-tet cyclization step, increasing the yield of yaequinolone C. PenF catalyzes the cationic rearrangement of the epoxide formed by penE (before ring opening to produce yaequinolone C) into yaequinolone D. Finally, the short-chain dehydrogenase/reductase (SDR)-like reductase penD, catalyzes both the dehydration of yaequinolone D and the reduction of the resulting oxonium to yield penigequinolone. This Penicillium thymicola protein is Cyclopenase penL.